The sequence spans 195 residues: Putative manganese efflux pump MntP (195 aa).

The next 6 membrane-spanning stretches (helical) occupy residues 3–23 (LSATLILAFGMSMDAFAASVG), 40–60 (GLIFGVIEAITPLIGWGLGLL), 68–88 (WDHWVAFTLLAFLGGRMVLAG), 106–126 (VLIATAIATSLDALAIGVGLA), 132–152 (ILHAALLIGLATLIMSTIGML), and 165–185 (AEIIGGLILIGIGCNILYSHI).

This sequence belongs to the MntP (TC 9.B.29) family.

Its subcellular location is the cell inner membrane. Functionally, probably functions as a manganese efflux pump. In Sodalis glossinidius (strain morsitans), this protein is Putative manganese efflux pump MntP.